The following is a 482-amino-acid chain: Probable cytochrome P450 508D1 (482 aa).

A helical membrane pass occupies residues 1-21; that stretch reads MVYLKNILIFLIIFLINPLVK. Cysteine 428 is a binding site for heme.

The protein belongs to the cytochrome P450 family. Requires heme as cofactor.

The protein resides in the membrane. This is Probable cytochrome P450 508D1 (cyp508D1) from Dictyostelium discoideum (Social amoeba).